The sequence spans 195 residues: Protein GrpE (195 aa).

This sequence belongs to the GrpE family. As to quaternary structure, homodimer.

Its subcellular location is the cytoplasm. Its function is as follows. Participates actively in the response to hyperosmotic and heat shock by preventing the aggregation of stress-denatured proteins, in association with DnaK and GrpE. It is the nucleotide exchange factor for DnaK and may function as a thermosensor. Unfolded proteins bind initially to DnaJ; upon interaction with the DnaJ-bound protein, DnaK hydrolyzes its bound ATP, resulting in the formation of a stable complex. GrpE releases ADP from DnaK; ATP binding to DnaK triggers the release of the substrate protein, thus completing the reaction cycle. Several rounds of ATP-dependent interactions between DnaJ, DnaK and GrpE are required for fully efficient folding. This chain is Protein GrpE, found in Francisella tularensis subsp. mediasiatica (strain FSC147).